A 217-amino-acid polypeptide reads, in one-letter code: MSIGILGKKLGMSQLFDKDGNAVPVTLIEAGPCRVTQLKTQPLDGYTAIQIGYGVSKDKHLSKPEKGHLLKSGEILLKHLKEYRVEENSSYEIGKEITVTNFEVGQKVDISGKSMGRGFSGYQKRHGFSRGPMSHGSKNHRAPGSTGAGTTPGRIYPGKRMAGRYGGKKITTKGLLVVKIDDQKNLLVVKGSVPGKPGSIVNIKPNNVVGNKGGAKS.

The tract at residues 129–161 (SRGPMSHGSKNHRAPGSTGAGTTPGRIYPGKRM) is disordered. The span at 142-153 (APGSTGAGTTPG) shows a compositional bias: low complexity.

The protein belongs to the universal ribosomal protein uL3 family. As to quaternary structure, part of the 50S ribosomal subunit. Forms a cluster with proteins L14 and L19.

One of the primary rRNA binding proteins, it binds directly near the 3'-end of the 23S rRNA, where it nucleates assembly of the 50S subunit. In Prochlorococcus marinus subsp. pastoris (strain CCMP1986 / NIES-2087 / MED4), this protein is Large ribosomal subunit protein uL3.